The following is a 1594-amino-acid chain: RB1-inducible coiled-coil protein 1 (1594 aa).

Phosphoserine is present on residues serine 222, serine 229, and serine 237. The residue at position 238 (threonine 238) is a Phosphothreonine. 5 positions are modified to phosphoserine: serine 243, serine 253, serine 257, serine 261, and serine 266. Residues 566 to 569 (KPRK) carry the Nuclear localization signal motif. Residues serine 624, serine 647, serine 650, serine 652, serine 653, serine 734, serine 1091, serine 1222, serine 1370, and serine 1484 each carry the phosphoserine modification. The interval 638-673 (EQKASVSQTSPQSASSPRMESTAGITTTTSPRTPPP) is disordered. Low complexity predominate over residues 641-654 (ASVSQTSPQSASSP). The short motif at 731 to 737 (DFMSAVN) is the FFAT element. Coiled-coil stretches lie at residues 859–1397 (LKEK…SSSF) and 1438–1485 (METS…SQSM).

The protein belongs to the ATG17 family. Part of a complex consisting of ATG13/KIAA0652, ULK1 and RB1CC1. This complex associates with ATG101. Interacts with PTK2/FAK1 and PTK2B/PYK2. Interacts with GABARAP and GABARAPL1. Interacts with ATG16L1; the interaction is required for ULK1 complex-dependent autophagy. Interacts with RNF111, SKI and SMAD7. Interacts with COP1 in the cytoplasm of proliferating cells in response to UV stimulation. Interacts with TP53. Interacts with C9orf72. Interacts with WDR45B. Interacts with ATG13; this interaction is increased in the absence of TMEM39A. Interacts with WIPI2. Interacts with TAX1BP1. Interacts (via phosphorylated FFAT motif) with MOSPD2, VAPA and VAPB. Phosphorylation at Ser-734 of the FFAT motif activates interaction with MOSPD2, VAPA and VAPB. In terms of tissue distribution, expression levels correlated closely with those of RB1 in cancer cell lines as well as in various normal human tissues. Abundantly expressed in human musculoskeletal and cultured osteosarcoma cells.

It localises to the nucleus. The protein resides in the cytoplasm. Its subcellular location is the cytosol. It is found in the preautophagosomal structure. The protein localises to the lysosome. Functionally, involved in autophagy. Regulates early events but also late events of autophagosome formation through direct interaction with Atg16L1. Required for the formation of the autophagosome-like double-membrane structure that surrounds the Salmonella-containing vacuole (SCV) during S.typhimurium infection and subsequent xenophagy. Involved in repair of DNA damage caused by ionizing radiation, which subsequently improves cell survival by decreasing apoptosis. Inhibits PTK2/FAK1 and PTK2B/PYK2 kinase activity, affecting their downstream signaling pathways. Plays a role as a modulator of TGF-beta-signaling by restricting substrate specificity of RNF111. Functions as a DNA-binding transcription factor. Is a potent regulator of the RB1 pathway through induction of RB1 expression. Plays a crucial role in muscular differentiation. Plays an indispensable role in fetal hematopoiesis and in the regulation of neuronal homeostasis. In Homo sapiens (Human), this protein is RB1-inducible coiled-coil protein 1.